A 923-amino-acid chain; its full sequence is Mitochondrial 10-formyltetrahydrofolate dehydrogenase (923 aa).

The N-terminal 19 residues, 1 to 19, are a transit peptide targeting the mitochondrion; not cleaved; that stretch reads MLRRGSQALRRFSTGRVYF. A hydrolase domain region spans residues 23-331; sequence LKLALIGQSL…PASQYFSTGE (309 aa). At serine 31 the chain carries Phosphoserine. Lysine 60 bears the N6-succinyllysine mark. Position 110–112 (110–112) interacts with (6R)-10-formyltetrahydrofolate; it reads QFI. Histidine 128 acts as the Proton donor in catalysis. Aspartate 164 is a (6R)-10-formyltetrahydrofolate binding site. Residues 339 to 416 enclose the Carrier domain; sequence AEEVKVAETI…GFIQKVVRKL (78 aa). At serine 375 the chain carries O-(pantetheine 4'-phosphoryl)serine. The interval 438 to 923 is aldehyde dehydrogenase domain; sequence MVKMPYQCFI…LKTKTVTLEY (486 aa). Residues 592–594 and 618–621 contribute to the NADP(+) site; these read IPW and KPAQ. Phosphoserine is present on serine 650. NADP(+) contacts are provided by residues 651 to 656 and 671 to 672; these read GGIAGQ and GS. Residue lysine 681 is modified to N6-succinyllysine. Residue glutamate 694 is the Proton acceptor of the active site. NADP(+) is bound at residue 694-695; it reads EL. Cysteine 728 functions as the Proton donor in the catalytic mechanism. Lysine 778 contacts NADP(+). N6-succinyllysine is present on lysine 788. 825 to 827 contributes to the NADP(+) binding site; that stretch reads ESF. At lysine 903 the chain carries N6-acetyllysine.

In the N-terminal section; belongs to the GART family. This sequence in the C-terminal section; belongs to the aldehyde dehydrogenase family. ALDH1L subfamily. Phosphopantetheinylation at Ser-375 by AASDHPPT is required for the formyltetrahydrofolate dehydrogenase activity. As to expression, highly expressed in pancreas, heart, brain and skeletal muscle.

Its subcellular location is the mitochondrion. It carries out the reaction (6R)-10-formyltetrahydrofolate + NADP(+) + H2O = (6S)-5,6,7,8-tetrahydrofolate + CO2 + NADPH + H(+). Mitochondrial 10-formyltetrahydrofolate dehydrogenase that catalyzes the NADP(+)-dependent conversion of 10-formyltetrahydrofolate to tetrahydrofolate and carbon dioxide. This Homo sapiens (Human) protein is Mitochondrial 10-formyltetrahydrofolate dehydrogenase.